Consider the following 274-residue polypeptide: Large ribosomal subunit protein uL2 (274 aa).

2 disordered regions span residues 37-60 (QHQKSGRNNNGHITTRHKGGGHKH) and 224-252 (AMNPIDHPHGGGEGRTGEGRHAVDPWGNL). The span at 50-60 (TTRHKGGGHKH) shows a compositional bias: basic residues. The segment covering 229 to 246 (DHPHGGGEGRTGEGRHAV) has biased composition (basic and acidic residues).

This sequence belongs to the universal ribosomal protein uL2 family. Part of the 50S ribosomal subunit. Forms a bridge to the 30S subunit in the 70S ribosome.

Its function is as follows. One of the primary rRNA binding proteins. Required for association of the 30S and 50S subunits to form the 70S ribosome, for tRNA binding and peptide bond formation. It has been suggested to have peptidyltransferase activity; this is somewhat controversial. Makes several contacts with the 16S rRNA in the 70S ribosome. The polypeptide is Large ribosomal subunit protein uL2 (Paracidovorax citrulli (strain AAC00-1) (Acidovorax citrulli)).